A 296-amino-acid chain; its full sequence is Protoheme IX farnesyltransferase 2 (296 aa).

9 consecutive transmembrane segments (helical) span residues Leu-7 to Phe-27, Pro-36 to Leu-56, Leu-83 to Trp-103, Leu-108 to Phe-128, Tyr-134 to Val-154, Ala-163 to Phe-183, Ile-207 to Gly-227, Ala-229 to Leu-249, and Phe-265 to Val-285.

Belongs to the UbiA prenyltransferase family. Protoheme IX farnesyltransferase subfamily.

The protein resides in the cell inner membrane. The catalysed reaction is heme b + (2E,6E)-farnesyl diphosphate + H2O = Fe(II)-heme o + diphosphate. It functions in the pathway porphyrin-containing compound metabolism; heme O biosynthesis; heme O from protoheme: step 1/1. In terms of biological role, converts heme B (protoheme IX) to heme O by substitution of the vinyl group on carbon 2 of heme B porphyrin ring with a hydroxyethyl farnesyl side group. The polypeptide is Protoheme IX farnesyltransferase 2 (Pseudomonas aeruginosa (strain UCBPP-PA14)).